A 103-amino-acid chain; its full sequence is Large ribosomal subunit protein uL23 (103 aa).

It belongs to the universal ribosomal protein uL23 family. As to quaternary structure, part of the 50S ribosomal subunit. Contacts protein L29, and trigger factor when it is bound to the ribosome.

Its function is as follows. One of the early assembly proteins it binds 23S rRNA. One of the proteins that surrounds the polypeptide exit tunnel on the outside of the ribosome. Forms the main docking site for trigger factor binding to the ribosome. This chain is Large ribosomal subunit protein uL23, found in Zymomonas mobilis subsp. mobilis (strain ATCC 31821 / ZM4 / CP4).